Here is a 387-residue protein sequence, read N- to C-terminus: Putative ankyrin repeat protein RBE_0984 (387 aa).

5 ANK repeats span residues 50–79, 88–119, 123–154, 159–188, and 210–239; these read YGNTPLSLALNKKLEAVCEVLVSRMSDKDI, HRETYFTLAAIKGFKGVCENLAPRMSNEAINV, RKHTALTLAADKNLPQVCIKLIPIMFDEVINV, HKDSALRKAIWNDLDVVCQMLIPVTSKENI, and VCKMLISRMIEDNSLDIINHVISKGELKGE. Coiled-coil stretches lie at residues 251–278 and 311–352; these read FEDICELLQKSHEEYKEQKQKENEKKCE and SISA…ALEK.

This chain is Putative ankyrin repeat protein RBE_0984, found in Rickettsia bellii (strain RML369-C).